Here is a 256-residue protein sequence, read N- to C-terminus: Acetyl-coenzyme A carboxylase carboxyl transferase subunit alpha (256 aa).

The CoA carboxyltransferase C-terminal domain maps to 1–236 (MTDVSRVLKE…KANLIEQITS (236 aa)).

The protein belongs to the AccA family. In terms of assembly, acetyl-CoA carboxylase is a heterohexamer composed of biotin carboxyl carrier protein (AccB), biotin carboxylase (AccC) and two subunits each of ACCase subunit alpha (AccA) and ACCase subunit beta (AccD).

The protein localises to the cytoplasm. The enzyme catalyses N(6)-carboxybiotinyl-L-lysyl-[protein] + acetyl-CoA = N(6)-biotinyl-L-lysyl-[protein] + malonyl-CoA. It participates in lipid metabolism; malonyl-CoA biosynthesis; malonyl-CoA from acetyl-CoA: step 1/1. In terms of biological role, component of the acetyl coenzyme A carboxylase (ACC) complex. First, biotin carboxylase catalyzes the carboxylation of biotin on its carrier protein (BCCP) and then the CO(2) group is transferred by the carboxyltransferase to acetyl-CoA to form malonyl-CoA. In Streptococcus pyogenes serotype M12 (strain MGAS2096), this protein is Acetyl-coenzyme A carboxylase carboxyl transferase subunit alpha.